The following is a 355-amino-acid chain: uncharacterized protein (355 aa).

It belongs to the carbohydrate kinase PfkB family.

This is an uncharacterized protein from Dictyostelium discoideum (Social amoeba).